The following is a 1302-amino-acid chain: Ubiquitin conjugation factor E4 B (1302 aa).

N-acetylmethionine is present on M1. The segment at 1-155 (MEELSADEIR…EPSSGPEVSE (155 aa)) is disordered. Residues 16–33 (RLAGGQTSQPTTPLTSPQ) show a composition bias toward low complexity. 2 positions are modified to phosphoserine: S23 and S31. Residues 51–64 (QSLGLNVHNMTPAT) show a composition bias toward polar residues. The span at 76-99 (SQSSEGVSSLSSSPSNSLETQSQS) shows a compositional bias: low complexity. Phosphoserine is present on residues S84, S88, S90, S101, S103, S105, and S124. The segment covering 134–147 (NDRREKRSLSDKEP) has biased composition (basic and acidic residues). S238 is subject to Phosphoserine. Residues 299–327 (AASQLAVPSTPLSPHSAASGTAAGSQPSS) show a composition bias toward polar residues. The segment at 299–406 (AASQLAVPST…SPSLGASGGA (108 aa)) is disordered. Over residues 340-374 (ASSGVSILSSSPSPPALASSPQAVPASSSRQRPSS) the composition is skewed to low complexity. Position 383 is a phosphoserine (S383). Low complexity predominate over residues 384 to 400 (PSATSRRPSSLRISPSL). A phosphoserine mark is found at S803 and S969. A disordered region spans residues 1057 to 1077 (NKEQWDQLPRDQQQARQSQLA). A compositionally biased stretch (low complexity) spans 1066 to 1077 (RDQQQARQSQLA). The 74-residue stretch at 1227-1300 (DAPDEFRDPL…QAWMREKQNS (74 aa)) folds into the U-box domain. The residue at position 1265 (S1265) is a Phosphoserine.

It belongs to the ubiquitin conjugation factor E4 family. In terms of assembly, interacts with VCP/p97. Interacts with STUB1/CHIP and UNC45B. Post-translationally, proteolytically cleaved by caspases during apoptosis. Cleaved efficiently at Asp-123 by caspase-6 and granzyme B. Cleaved with approximately 10-fold less efficiency at Asp-109 by caspase-3 and caspase-7. In terms of tissue distribution, expressed in differentiated myotubes (at protein level). Highest expression in ovary, testis, heart and skeletal muscle. Expression is low in colon, thymus and peripheral blood leukocytes. Almost undetectable in lung and spleen.

The protein resides in the cytoplasm. It localises to the nucleus. The enzyme catalyses S-ubiquitinyl-[E2 ubiquitin-conjugating enzyme]-L-cysteine + [acceptor protein]-L-lysine = [E2 ubiquitin-conjugating enzyme]-L-cysteine + N(6)-ubiquitinyl-[acceptor protein]-L-lysine.. It participates in protein modification; protein ubiquitination. In terms of biological role, ubiquitin-protein ligase that probably functions as an E3 ligase in conjunction with specific E1 and E2 ligases. May also function as an E4 ligase mediating the assembly of polyubiquitin chains on substrates ubiquitinated by another E3 ubiquitin ligase. May regulate myosin assembly in striated muscles together with STUB1 and VCP/p97 by targeting myosin chaperone UNC45B for proteasomal degradation. This chain is Ubiquitin conjugation factor E4 B, found in Homo sapiens (Human).